A 324-amino-acid polypeptide reads, in one-letter code: Elongation factor Ts, mitochondrial (324 aa).

A mitochondrion-targeting transit peptide spans 1 to 44 (MSLLRSLRFFPVACTGRSARAVLLQPSQPWHTLHAGPSLSSSAS). 2 positions are modified to N6-succinyllysine: K75 and K132. S269 is modified (phosphoserine).

The protein belongs to the EF-Ts family.

It localises to the mitochondrion. Its function is as follows. Associates with the EF-Tu.GDP complex and induces the exchange of GDP to GTP. It remains bound to the aminoacyl-tRNA.EF-Tu.GTP complex up to the GTP hydrolysis stage on the ribosome. The sequence is that of Elongation factor Ts, mitochondrial (Tsfm) from Rattus norvegicus (Rat).